The sequence spans 522 residues: O-fucosyltransferase 38 (522 aa).

Residues 26–46 (AISLYLIFVFAFTIWVLVFSS) form a helical; Signal-anchor for type II membrane protein membrane-spanning segment. Residues 54-67 (DHTKHQQQHHRDLI) are compositionally biased toward basic and acidic residues. The disordered stretch occupies residues 54 to 73 (DHTKHQQQHHRDLIDSESFP). The N-linked (GlcNAc...) asparagine glycan is linked to N147. 284-286 (HLR) serves as a coordination point for substrate. Residue N325 is glycosylated (N-linked (GlcNAc...) asparagine). Residues 475 to 496 (HKDRQGAPRRRKGPTQGIKGRA) form a disordered region.

The protein belongs to the glycosyltransferase GT106 family.

The protein localises to the membrane. It functions in the pathway glycan metabolism. The chain is O-fucosyltransferase 38 from Arabidopsis thaliana (Mouse-ear cress).